A 488-amino-acid chain; its full sequence is Palmitoleoyl-protein carboxylesterase notum1' (488 aa).

A signal peptide spans 1 to 19 (MAGTLCVTLLLLLSTIAVG). N-linked (GlcNAc...) asparagine glycosylation is present at N90. Catalysis depends on charge relay system residues S226, D334, and H383.

Belongs to the pectinacetylesterase family. Notum subfamily. Expressed in the egg and through cleavage to gastrulation stages. Enriched in the animal (prospective ectoderm) and dorsal regions in early gastrula. Shows a dynamic expression during embryogenesis, in particular during neural induction and antero-posterior (AP) patterning.

It localises to the secreted. It carries out the reaction [Wnt protein]-O-(9Z)-hexadecenoyl-L-serine + H2O = [Wnt protein]-L-serine + (9Z)-hexadecenoate + H(+). In terms of biological role, carboxylesterase that acts as a key negative regulator of the Wnt signaling pathway by specifically mediating depalmitoleoylation of WNT proteins. Serine palmitoleoylation of WNT proteins is required for efficient binding to frizzled receptors. Functions in the prospective ectoderm and is required for neural induction. The chain is Palmitoleoyl-protein carboxylesterase notum1' from Xenopus laevis (African clawed frog).